The sequence spans 255 residues: Na(+)-translocating NADH-quinone reductase subunit C (255 aa).

Residues 11 to 31 (LGVVVGLSLVCSIIVSTAAVG) form a helical membrane-spanning segment. Residue threonine 223 is modified to FMN phosphoryl threonine.

This sequence belongs to the NqrC family. Composed of six subunits; NqrA, NqrB, NqrC, NqrD, NqrE and NqrF. FMN serves as cofactor.

The protein localises to the cell inner membrane. The enzyme catalyses a ubiquinone + n Na(+)(in) + NADH + H(+) = a ubiquinol + n Na(+)(out) + NAD(+). Its function is as follows. NQR complex catalyzes the reduction of ubiquinone-1 to ubiquinol by two successive reactions, coupled with the transport of Na(+) ions from the cytoplasm to the periplasm. NqrA to NqrE are probably involved in the second step, the conversion of ubisemiquinone to ubiquinol. The polypeptide is Na(+)-translocating NADH-quinone reductase subunit C (Vibrio vulnificus (strain CMCP6)).